A 364-amino-acid chain; its full sequence is tRNA 2-selenouridine synthase (364 aa).

The Rhodanese domain occupies 14-137 (LIADTPIIDV…LRQTAIQATI (124 aa)). Cys-97 serves as the catalytic S-selanylcysteine intermediate.

Belongs to the SelU family. Monomer.

The enzyme catalyses 5-methylaminomethyl-2-thiouridine(34) in tRNA + selenophosphate + (2E)-geranyl diphosphate + H2O + H(+) = 5-methylaminomethyl-2-selenouridine(34) in tRNA + (2E)-thiogeraniol + phosphate + diphosphate. It carries out the reaction 5-methylaminomethyl-2-thiouridine(34) in tRNA + (2E)-geranyl diphosphate = 5-methylaminomethyl-S-(2E)-geranyl-thiouridine(34) in tRNA + diphosphate. The catalysed reaction is 5-methylaminomethyl-S-(2E)-geranyl-thiouridine(34) in tRNA + selenophosphate + H(+) = 5-methylaminomethyl-2-(Se-phospho)selenouridine(34) in tRNA + (2E)-thiogeraniol. It catalyses the reaction 5-methylaminomethyl-2-(Se-phospho)selenouridine(34) in tRNA + H2O = 5-methylaminomethyl-2-selenouridine(34) in tRNA + phosphate. In terms of biological role, involved in the post-transcriptional modification of the uridine at the wobble position (U34) of tRNA(Lys), tRNA(Glu) and tRNA(Gln). Catalyzes the conversion of 2-thiouridine (S2U-RNA) to 2-selenouridine (Se2U-RNA). Acts in a two-step process involving geranylation of 2-thiouridine (S2U) to S-geranyl-2-thiouridine (geS2U) and subsequent selenation of the latter derivative to 2-selenouridine (Se2U) in the tRNA chain. The polypeptide is tRNA 2-selenouridine synthase (Escherichia coli O6:K15:H31 (strain 536 / UPEC)).